We begin with the raw amino-acid sequence, 102 residues long: MDNQNIRIRLKAYDHRVLDNSTKEIVNTAKRTGARVRGPIPLPTHIEKFTVNRSPHVDKKSREQFEIRTHRRLLDIVEPTPQTVDALMKLDLAAGVDVEIKL.

The protein belongs to the universal ribosomal protein uS10 family. In terms of assembly, part of the 30S ribosomal subunit.

In terms of biological role, involved in the binding of tRNA to the ribosomes. The chain is Small ribosomal subunit protein uS10 from Gluconacetobacter diazotrophicus (strain ATCC 49037 / DSM 5601 / CCUG 37298 / CIP 103539 / LMG 7603 / PAl5).